Reading from the N-terminus, the 597-residue chain is Putative heat shock protein HSP 90-beta-3 (597 aa).

Positions 46, 88, and 107 each coordinate ATP. The disordered stretch occupies residues 201 to 241 (DKEISDDEAEEEKGEKEEEDKDDEEKPKIKDVGSDEEDDSK). Positions 204-223 (ISDDEAEEEKGEKEEEDKDD) are enriched in acidic residues. Residues 224–233 (EEKPKIKDVG) are compositionally biased toward basic and acidic residues. Arg-334 is a binding site for ATP. Residues 414 to 446 (LELPEDEEEKKKMEESKEKFENLCKLMKEILDK) adopt a coiled-coil conformation. Over residues 564 to 578 (DEDEVAAEEPSDAVP) the composition is skewed to acidic residues. Residues 564–597 (DEDEVAAEEPSDAVPDEIPPLEGDEDASRMEEVD) are disordered. The TPR repeat-binding motif lies at 593-597 (MEEVD).

It belongs to the heat shock protein 90 family. In terms of assembly, homodimer.

The protein localises to the cytoplasm. Putative molecular chaperone that may promote the maturation, structural maintenance and proper regulation of specific target proteins. The protein is Putative heat shock protein HSP 90-beta-3 (HSP90AB3P) of Homo sapiens (Human).